The primary structure comprises 563 residues: MTKTSRPLYISYAGPSLLEMPLLNKGSAFTPQERVEFNLIGLLPQNVETIEEQVTRVYSQYKQCASDLDKHIYLRSIQDNNETLFFRLLDSHLDEMLPIIYTPTVGQACQEFSKIYRTHRGLFISYPERDRIDDILRSATKDRIKIIVVTDSERILGLGDQGIGGMGIPIGKLSLYTACGGISPAYTLPIVLDVGTNNRELLDDPMYMGWRHERVSGKEYEDFIALFIDAVQRRWPDVLLQFEDFAQSNAMPLLEKYRDELCCFNDDIQGTASVAVGTLLAACKAKNETLGQQKVVFVGAGSAGCGIAEHIIAAMRIEGLSESEARKRIFMVDRFGLLTEGMDNLLDFQKRLAQKTADVSGWTAGTEAFPQLLDVVTNAGATVLIGVSGQRGLFTEQVIRELHKHCAKPLVMPLSNPTSKVEATPEEILRWTDGNALVATGSPFAPVEINGRTVHIAQCNNSYIFPGIGLGVVACKASRITDRMLMAASNALAECSPMVTGQGDAVLPPLKEIQQVSRKIALAVAKEAQAEGLALETSEEALLEAIERNFWLPGYRAYRRRSV.

The active-site Proton donor is the Tyr101. Arg154 contributes to the NAD(+) binding site. Lys172 functions as the Proton acceptor in the catalytic mechanism. Positions 243, 244, and 267 each coordinate a divalent metal cation. Positions 267 and 416 each coordinate NAD(+).

It belongs to the malic enzymes family. Homotetramer. It depends on Mg(2+) as a cofactor. The cofactor is Mn(2+).

The catalysed reaction is (S)-malate + NAD(+) = pyruvate + CO2 + NADH. It carries out the reaction oxaloacetate + H(+) = pyruvate + CO2. This chain is NAD-dependent malic enzyme, found in Pseudomonas savastanoi pv. phaseolicola (strain 1448A / Race 6) (Pseudomonas syringae pv. phaseolicola (strain 1448A / Race 6)).